The following is a 260-amino-acid chain: Triosephosphate isomerase (260 aa).

11 to 13 (NWK) contacts substrate. H103 serves as the catalytic Electrophile. The Proton acceptor role is filled by E175. Residues G181, S220, and 241–242 (GG) each bind substrate.

It belongs to the triosephosphate isomerase family. As to quaternary structure, homodimer.

The protein localises to the cytoplasm. The catalysed reaction is D-glyceraldehyde 3-phosphate = dihydroxyacetone phosphate. It functions in the pathway carbohydrate biosynthesis; gluconeogenesis. The protein operates within carbohydrate degradation; glycolysis; D-glyceraldehyde 3-phosphate from glycerone phosphate: step 1/1. Involved in the gluconeogenesis. Catalyzes stereospecifically the conversion of dihydroxyacetone phosphate (DHAP) to D-glyceraldehyde-3-phosphate (G3P). This Shewanella sp. (strain MR-7) protein is Triosephosphate isomerase.